Reading from the N-terminus, the 447-residue chain is Teichoic acids export ATP-binding protein TagH (447 aa).

The 223-residue stretch at 24-246 folds into the ABC transporter domain; the sequence is DKLKTLFSVF…YRAFLHRYNH (223 aa). 60-67 lines the ATP pocket; the sequence is GLNGSGKS. The tract at residues 247-447 is unknown; it reads FTEPQKESYQ…QVLKLKEVTE (201 aa). Residues 359–393 are disordered; that stretch reads NAVKTTKTKPASTKESRQQEEVQPSPTNVPENNNS. 2 stretches are compositionally biased toward polar residues: residues 360–369 and 379–393; these read AVKTTKTKPA and EVQP…NNNS. Residues 398-442 form the LysM domain; it reads STYTVEVGDSVSLIAENHGLTIEQLQTLNPEIIEVPIYPGQVLKL.

The protein belongs to the ABC transporter superfamily. Teichoic acids exporter (TC 3.A.1.104.1) family. As to quaternary structure, the complex is composed of two ATP-binding proteins (TagH) and two transmembrane proteins (TagG).

It is found in the cell membrane. It carries out the reaction ATP + H2O + teichoic acidSide 1 = ADP + phosphate + teichoic acidSide 2.. Functionally, part of the ABC transporter complex TagGH involved in teichoic acids export. Responsible for energy coupling to the transport system. The protein is Teichoic acids export ATP-binding protein TagH of Enterococcus faecalis (strain ATCC 700802 / V583).